A 904-amino-acid polypeptide reads, in one-letter code: MSQQTTIRKLAELVNTPVDKLLVQLAEAGMKFSGPDQVVTSTEKMKLLGFLRRTHGKAETPAEAASEAAKKITLNRRKLQEVTVSAGRTKTTVNVEVRQKRTYVKSENEGSGRATPMTPDEERADILAKLAASRQRNLDEQQRLAESDRVRDEEIQRKRDEEQAAKDRAEAERKAAEEAAAAASAPAPVAAAPTPSAAAPAARAPSSPSSAPRPSRPGGASPASRPSTPARPDDRNNAAKHKTRGSHVMVAGVEDDDATKRFAGQLHLSAADRARRSNVRGKPTGRPGSSSSRRGNDNGRGSNQANSGPHGFERPTAPVVREVAIGETITVADLAQKLALKGGDVVKALFKMGVMATITQSIDHDTAALVTEELGHKAVRADNADFEDALLAHAEDAQGDTTTRPPVVTIMGHVDHGKTSLLDYIRRTKIASGEAGGITQHIGAYHVETDRGVISFLDTPGHAAFTSMRARGAKITDIVVLVVAADDGVMPQTKEAVAHAKAAGVPLIVAVNKIDKAGADPLRVKNELLAENVVAEDFGGDTQFIEVSAKVGTGVDTLLDAISLQAEVLELKAVAEGRASGTVIESSLDKGRGPVATVLVQQGALKRGDYLVCGIQYGRVRALFDETGHQPGSAGPSIPVQVLGLSGVPEAGDDFVVVDDERLAKDVAQQRETKRRESRLVASATNRMEDILAQMGKGEGQQVLNLVIKADVQGSVEALKQSLVALSNEDIRINVIHSGVGGITESDANSAAASKATIIGFNVRADASARKIVESNGVDLRYFSIIYDVIDQVKQVASGLLGVEIREEIMGIAQVRDVFRSSKFGAVAGCMIIEGVVKRSKPIRVLRDSVVVFEGELESLRRFKENVDEVRNGNECGIGVKAYNDVKAGDQIECFERIEVARTL.

2 disordered regions span residues 134-248 (RQRN…GSHV) and 267-315 (HLSA…FERP). A compositionally biased stretch (basic and acidic residues) spans 136–177 (RNLDEQQRLAESDRVRDEEIQRKRDEEQAAKDRAEAERKAAE). Low complexity-rich tracts occupy residues 178–230 (EAAA…STPA) and 285–303 (GRPG…RGSN). The 170-residue stretch at 403-572 (TRPPVVTIMG…SLQAEVLELK (170 aa)) folds into the tr-type G domain. A G1 region spans residues 412–419 (GHVDHGKT). Residue 412-419 (GHVDHGKT) coordinates GTP. Residues 437 to 441 (GITQH) form a G2 region. The segment at 458 to 461 (DTPG) is G3. Residues 458-462 (DTPGH) and 512-515 (NKID) contribute to the GTP site. The G4 stretch occupies residues 512-515 (NKID). Positions 548–550 (SAK) are G5.

This sequence belongs to the TRAFAC class translation factor GTPase superfamily. Classic translation factor GTPase family. IF-2 subfamily.

It localises to the cytoplasm. Its function is as follows. One of the essential components for the initiation of protein synthesis. Protects formylmethionyl-tRNA from spontaneous hydrolysis and promotes its binding to the 30S ribosomal subunits. Also involved in the hydrolysis of GTP during the formation of the 70S ribosomal complex. The polypeptide is Translation initiation factor IF-2 (Xanthomonas oryzae pv. oryzae (strain PXO99A)).